A 287-amino-acid chain; its full sequence is Shikimate dehydrogenase (NADP(+)) (287 aa).

Residues 21–23 and Thr68 each bind shikimate; that span reads SKS. Lys72 (proton acceptor) is an active-site residue. Residues Asn93 and Asp109 each coordinate shikimate. Residues 133-137, 157-162, and Met226 each bind NADP(+); these read GAGGA and NRTQTK. Residue Tyr228 coordinates shikimate. An NADP(+)-binding site is contributed by Gly250.

The protein belongs to the shikimate dehydrogenase family. Homodimer.

It carries out the reaction shikimate + NADP(+) = 3-dehydroshikimate + NADPH + H(+). It participates in metabolic intermediate biosynthesis; chorismate biosynthesis; chorismate from D-erythrose 4-phosphate and phosphoenolpyruvate: step 4/7. Involved in the biosynthesis of the chorismate, which leads to the biosynthesis of aromatic amino acids. Catalyzes the reversible NADPH linked reduction of 3-dehydroshikimate (DHSA) to yield shikimate (SA). The polypeptide is Shikimate dehydrogenase (NADP(+)) (Shewanella oneidensis (strain ATCC 700550 / JCM 31522 / CIP 106686 / LMG 19005 / NCIMB 14063 / MR-1)).